Reading from the N-terminus, the 172-residue chain is Ribosome maturation factor RimM (172 aa).

Positions 96–168 (DGEFYYHEII…RIEVELMEGL (73 aa)) constitute a PRC barrel domain.

This sequence belongs to the RimM family. In terms of assembly, binds ribosomal protein uS19.

Its subcellular location is the cytoplasm. Its function is as follows. An accessory protein needed during the final step in the assembly of 30S ribosomal subunit, possibly for assembly of the head region. Essential for efficient processing of 16S rRNA. May be needed both before and after RbfA during the maturation of 16S rRNA. It has affinity for free ribosomal 30S subunits but not for 70S ribosomes. This chain is Ribosome maturation factor RimM, found in Streptococcus thermophilus (strain ATCC BAA-491 / LMD-9).